Consider the following 186-residue polypeptide: High mobility group protein B4 (186 aa).

2 consecutive DNA-binding regions (HMG box) follow at residues 9 to 79 and 93 to 161; these read PKAN…MNYV and PRRP…ELYR. The disordered stretch occupies residues 77-98; the sequence is NYVGKRKKRRKRDPQEPRRPPS.

Belongs to the HMGB family.

The protein localises to the nucleus. Its subcellular location is the chromosome. The polypeptide is High mobility group protein B4 (HMGB4) (Homo sapiens (Human)).